Here is a 343-residue protein sequence, read N- to C-terminus: L-threonine 3-dehydrogenase (343 aa).

Zn(2+) is bound at residue Cys40. Residues Thr42 and His45 each act as charge relay system in the active site. The Zn(2+) site is built by His65, Glu66, Cys95, Cys98, Cys101, and Cys109. NAD(+) contacts are provided by residues Ile177, Asp197, Arg202, Leu264–Ile266, and Ile288–Tyr289.

This sequence belongs to the zinc-containing alcohol dehydrogenase family. As to quaternary structure, homotetramer. It depends on Zn(2+) as a cofactor.

Its subcellular location is the cytoplasm. The enzyme catalyses L-threonine + NAD(+) = (2S)-2-amino-3-oxobutanoate + NADH + H(+). It functions in the pathway amino-acid degradation; L-threonine degradation via oxydo-reductase pathway; glycine from L-threonine: step 1/2. Its function is as follows. Catalyzes the NAD(+)-dependent oxidation of L-threonine to 2-amino-3-ketobutyrate. The sequence is that of L-threonine 3-dehydrogenase from Vibrio atlanticus (strain LGP32) (Vibrio splendidus (strain Mel32)).